The chain runs to 496 residues: Probable cytosol aminopeptidase (496 aa).

Residues Lys261 and Asp266 each contribute to the Mn(2+) site. Lys273 is an active-site residue. Positions 284, 343, and 345 each coordinate Mn(2+). Arg347 is a catalytic residue.

This sequence belongs to the peptidase M17 family. Mn(2+) is required as a cofactor.

Its subcellular location is the cytoplasm. The enzyme catalyses Release of an N-terminal amino acid, Xaa-|-Yaa-, in which Xaa is preferably Leu, but may be other amino acids including Pro although not Arg or Lys, and Yaa may be Pro. Amino acid amides and methyl esters are also readily hydrolyzed, but rates on arylamides are exceedingly low.. It carries out the reaction Release of an N-terminal amino acid, preferentially leucine, but not glutamic or aspartic acids.. Its function is as follows. Presumably involved in the processing and regular turnover of intracellular proteins. Catalyzes the removal of unsubstituted N-terminal amino acids from various peptides. This chain is Probable cytosol aminopeptidase, found in Bacillus licheniformis (strain ATCC 14580 / DSM 13 / JCM 2505 / CCUG 7422 / NBRC 12200 / NCIMB 9375 / NCTC 10341 / NRRL NRS-1264 / Gibson 46).